Reading from the N-terminus, the 235-residue chain is Isopentenyl-diphosphate Delta-isomerase I (235 aa).

Lys38 contributes to the substrate binding site. Residues His42 and His54 each coordinate Mg(2+). The region spanning 52–204 (LLHRAFSVFL…GLKLSPWFRL (153 aa)) is the Nudix hydrolase domain. 2 residues coordinate substrate: Arg73 and Lys77. The active site involves Cys89. Ser90 lines the substrate pocket. Residues Glu149 and Glu151 each coordinate Mg(2+). The active site involves Glu151.

This sequence belongs to the IPP isomerase type 1 family. Mg(2+) serves as cofactor.

The catalysed reaction is isopentenyl diphosphate = dimethylallyl diphosphate. Its pathway is isoprenoid biosynthesis; dimethylallyl diphosphate biosynthesis; dimethylallyl diphosphate from isopentenyl diphosphate: step 1/1. It participates in porphyrin-containing compound metabolism; chlorophyll biosynthesis. Catalyzes the 1,3-allylic rearrangement of the homoallylic substrate isopentenyl (IPP) to its highly electrophilic allylic isomer, dimethylallyl diphosphate (DMAPP). This is Isopentenyl-diphosphate Delta-isomerase I (IPI1) from Camptotheca acuminata (Happy tree).